The primary structure comprises 125 residues: Small ribosomal subunit protein bS6 (125 aa).

The segment at 96 to 125 (VTEASPMKAAKEERKPLAEVENNDFEDAEE) is disordered. Positions 104 to 113 (AAKEERKPLA) are enriched in basic and acidic residues. Positions 116 to 125 (ENNDFEDAEE) are enriched in acidic residues.

The protein belongs to the bacterial ribosomal protein bS6 family.

In terms of biological role, binds together with bS18 to 16S ribosomal RNA. This chain is Small ribosomal subunit protein bS6, found in Haemophilus influenzae (strain 86-028NP).